Here is a 73-residue protein sequence, read N- to C-terminus: Long neurotoxin 2 (73 aa).

5 disulfide bridges follow: C3–C21, C14–C42, C27–C31, C46–C57, and C58–C63.

Belongs to the three-finger toxin family. Long-chain subfamily. Type II alpha-neurotoxin sub-subfamily. In terms of tissue distribution, expressed by the venom gland.

The protein localises to the secreted. In terms of biological role, binds with high affinity to muscular (alpha-1/CHRNA1) and neuronal (alpha-7/CHRNA7) nicotinic acetylcholine receptor (nAChR) and inhibits acetylcholine from binding to the receptor, thereby impairing neuromuscular and neuronal transmission. The chain is Long neurotoxin 2 from Ophiophagus hannah (King cobra).